Consider the following 262-residue polypeptide: Ornithine carbamoyltransferase (262 aa).

Carbamoyl phosphate-binding positions include 3 to 7, Gln30, Arg54, and 81 to 84; these read STRTR and HPTQ. Residues Asn114, Asp178, and 182–183 contribute to the L-ornithine site; that span reads SM. Carbamoyl phosphate-binding positions include 219-222 and Thr247; that span reads HCLP.

It belongs to the aspartate/ornithine carbamoyltransferase superfamily. OTCase family.

It localises to the cytoplasm. It carries out the reaction carbamoyl phosphate + L-ornithine = L-citrulline + phosphate + H(+). It functions in the pathway amino-acid biosynthesis; L-arginine biosynthesis; L-arginine from L-ornithine and carbamoyl phosphate: step 1/3. The protein operates within amino-acid degradation; L-arginine degradation via ADI pathway; carbamoyl phosphate from L-arginine: step 2/2. Reversibly catalyzes the transfer of the carbamoyl group from carbamoyl phosphate (CP) to the N(epsilon) atom of ornithine (ORN) to produce L-citrulline. The protein is Ornithine carbamoyltransferase (argF) of Neisseria meningitidis.